The sequence spans 417 residues: Glutamyl-tRNA reductase (417 aa).

Substrate-binding positions include Thr-49–Arg-52, Ser-105, Glu-110–Gln-112, and Gln-116. The Nucleophile role is filled by Cys-50. An NADP(+)-binding site is contributed by Gly-185–Ile-190.

The protein belongs to the glutamyl-tRNA reductase family. In terms of assembly, homodimer.

It carries out the reaction (S)-4-amino-5-oxopentanoate + tRNA(Glu) + NADP(+) = L-glutamyl-tRNA(Glu) + NADPH + H(+). The protein operates within porphyrin-containing compound metabolism; protoporphyrin-IX biosynthesis; 5-aminolevulinate from L-glutamyl-tRNA(Glu): step 1/2. Catalyzes the NADPH-dependent reduction of glutamyl-tRNA(Glu) to glutamate 1-semialdehyde (GSA). The sequence is that of Glutamyl-tRNA reductase from Azoarcus sp. (strain BH72).